The primary structure comprises 411 residues: S-adenosylmethionine synthase (411 aa).

His-15 contacts ATP. Asp-17 lines the Mg(2+) pocket. Glu-43 contributes to the K(+) binding site. The L-methionine site is built by Glu-56 and Gln-99. Positions 99 to 109 are flexible loop; that stretch reads QSQEIAQGVDT. ATP is bound by residues 179 to 181, Asp-260, 266 to 267, Ala-283, and Lys-287; these read DGK and RK. Asp-260 contacts L-methionine. Residue Lys-291 coordinates L-methionine.

The protein belongs to the AdoMet synthase family. In terms of assembly, homotetramer; dimer of dimers. Requires Mg(2+) as cofactor. The cofactor is K(+).

The protein resides in the cytoplasm. It carries out the reaction L-methionine + ATP + H2O = S-adenosyl-L-methionine + phosphate + diphosphate. Its pathway is amino-acid biosynthesis; S-adenosyl-L-methionine biosynthesis; S-adenosyl-L-methionine from L-methionine: step 1/1. Catalyzes the formation of S-adenosylmethionine (AdoMet) from methionine and ATP. The overall synthetic reaction is composed of two sequential steps, AdoMet formation and the subsequent tripolyphosphate hydrolysis which occurs prior to release of AdoMet from the enzyme. The chain is S-adenosylmethionine synthase from Corynebacterium jeikeium (strain K411).